A 118-amino-acid chain; its full sequence is Large ribosomal subunit protein bL20 (118 aa).

Belongs to the bacterial ribosomal protein bL20 family.

Its function is as follows. Binds directly to 23S ribosomal RNA and is necessary for the in vitro assembly process of the 50S ribosomal subunit. It is not involved in the protein synthesizing functions of that subunit. The polypeptide is Large ribosomal subunit protein bL20 (Gluconobacter oxydans (strain 621H) (Gluconobacter suboxydans)).